Consider the following 202-residue polypeptide: GTP cyclohydrolase 1 (202 aa).

Residues cysteine 90, histidine 93, and cysteine 163 each coordinate Zn(2+).

The protein belongs to the GTP cyclohydrolase I family. As to quaternary structure, homomer.

It carries out the reaction GTP + H2O = 7,8-dihydroneopterin 3'-triphosphate + formate + H(+). It participates in cofactor biosynthesis; 7,8-dihydroneopterin triphosphate biosynthesis; 7,8-dihydroneopterin triphosphate from GTP: step 1/1. This chain is GTP cyclohydrolase 1, found in Mycobacterium ulcerans (strain Agy99).